Reading from the N-terminus, the 358-residue chain is Phosphoserine aminotransferase (358 aa).

Arginine 41 serves as a coordination point for L-glutamate. Residues 75-76 (AS), tryptophan 100, threonine 148, aspartate 167, and glutamine 190 each bind pyridoxal 5'-phosphate. The residue at position 191 (lysine 191) is an N6-(pyridoxal phosphate)lysine. 233-234 (NT) lines the pyridoxal 5'-phosphate pocket.

This sequence belongs to the class-V pyridoxal-phosphate-dependent aminotransferase family. SerC subfamily. As to quaternary structure, homodimer. Requires pyridoxal 5'-phosphate as cofactor.

The protein resides in the cytoplasm. The enzyme catalyses O-phospho-L-serine + 2-oxoglutarate = 3-phosphooxypyruvate + L-glutamate. It carries out the reaction 4-(phosphooxy)-L-threonine + 2-oxoglutarate = (R)-3-hydroxy-2-oxo-4-phosphooxybutanoate + L-glutamate. Its pathway is amino-acid biosynthesis; L-serine biosynthesis; L-serine from 3-phospho-D-glycerate: step 2/3. The protein operates within cofactor biosynthesis; pyridoxine 5'-phosphate biosynthesis; pyridoxine 5'-phosphate from D-erythrose 4-phosphate: step 3/5. In terms of biological role, catalyzes the reversible conversion of 3-phosphohydroxypyruvate to phosphoserine and of 3-hydroxy-2-oxo-4-phosphonooxybutanoate to phosphohydroxythreonine. This is Phosphoserine aminotransferase from Campylobacter jejuni subsp. jejuni serotype O:2 (strain ATCC 700819 / NCTC 11168).